Consider the following 638-residue polypeptide: MNATEQFLAANAHVDEAAVQPLPNSRKIYVEGSRPDIRVPMREVSQDDTPTAFGGEKNPPIYVYDCSGPYSDPAAKIDIRSGLPALRAQWIAERGDVEALADLSSEFGRQRAADPKLDELRFPGLHRKPLRAKAGQNVSQMHYARRGIITPEMEYVAIRENNNRRAYIESLKATGPMGNRMADILGRQHKGQDFGASIPEEITPEFVRSEIARGRAIIPNNINHPESEPMIIGRNFLVKINANIGNSALGSSIQEEVEKMTWSIRWGGDTVMDLSTGKNIHETREWIIRNSPVPIGTVPIYQALEKVNGKAEDLTWEIFRDTLIEQAEQGVDYFTIHAGVLLRYVPMTANRLTGIVSRGGSIMAKWCLAHHKESFLYTHFEEICEIMKAYDVAFSLGDGLRPGSIYDANDEAQLGELETLGELTKIAWKHDVQVIIEGPGHVPMHMIKENMDLQLKHCDEAPFYTLGPLTTDIAPGYDHITSGIGAAMIGWYGTAMLCYVTPKEHLGLPDKDDVKEGIITYKLAAHAADLAKGHPGAQIRDNALSKARFEFRWDDQFNLGLDPDKAREFHDETLPKESAKVAHFCSMCGPHFCSMKITQEVREFAAQQGLDEAAALEKGMEVKSVEFVKAGAEVYSKI.

Substrate is bound by residues asparagine 243, methionine 272, tyrosine 301, histidine 337, serine 357–glycine 359, aspartate 398–arginine 401, and glutamate 437. Histidine 441 is a binding site for Zn(2+). Substrate is bound at residue tyrosine 464. Histidine 505 provides a ligand contact to Zn(2+). 3 residues coordinate [4Fe-4S] cluster: cysteine 585, cysteine 588, and cysteine 593.

This sequence belongs to the ThiC family. In terms of assembly, homodimer. [4Fe-4S] cluster is required as a cofactor.

The catalysed reaction is 5-amino-1-(5-phospho-beta-D-ribosyl)imidazole + S-adenosyl-L-methionine = 4-amino-2-methyl-5-(phosphooxymethyl)pyrimidine + CO + 5'-deoxyadenosine + formate + L-methionine + 3 H(+). Its pathway is cofactor biosynthesis; thiamine diphosphate biosynthesis. Catalyzes the synthesis of the hydroxymethylpyrimidine phosphate (HMP-P) moiety of thiamine from aminoimidazole ribotide (AIR) in a radical S-adenosyl-L-methionine (SAM)-dependent reaction. This Dechloromonas aromatica (strain RCB) protein is Phosphomethylpyrimidine synthase.